The sequence spans 80 residues: Serine palmitoyltransferase small subunit B (80 aa).

Over 1–11 (MDVKHIKDYLS) the chain is Cytoplasmic. A helical transmembrane segment spans residues 12-29 (WLYYQYLLITCSYVLEPW). Residues 30–36 (EQSIFNT) lie on the Lumenal side of the membrane. A helical transmembrane segment spans residues 37 to 57 (LLLTIIAMVIYSSYIFIPIHV). The Cytoplasmic portion of the chain corresponds to 58 to 80 (RLAVEFFSRIFGGQHESTVALMS).

This sequence belongs to the SPTSS family. SPTSSB subfamily. Component of the serine palmitoyltransferase (SPT) complex, which is composed of SPTLC1, SPTLC2 or SPTLC3 and SPTSSA or SPTSSB. The heterodimer consisting of SPTLC1 and SPTLC2/SPTLC3 forms the catalytic core of the enzyme, while SPTSSA or SPTSSB subunits determine substrate specificity. SPT also interacts with ORMDL proteins, especially ORMDL3, which negatively regulate SPT activity in the presence of ceramides.

The protein localises to the endoplasmic reticulum membrane. It functions in the pathway lipid metabolism; sphingolipid metabolism. Functionally, component of the serine palmitoyltransferase multisubunit enzyme (SPT) that catalyzes the initial and rate-limiting step in sphingolipid biosynthesis by condensing L-serine and activated acyl-CoA (most commonly palmitoyl-CoA) to form long-chain bases. The SPT complex is composed of SPTLC1, SPTLC2 or SPTLC3 and SPTSSA or SPTSSB. Within this complex, the heterodimer consisting of SPTLC1 and SPTLC2/SPTLC3 forms the catalytic core. Within the SPT complex, SPTSSB stimulates the catalytic activity and plays a role in substrate specificity. SPT complexes with this subunit showing a preference for longer acyl-CoAs. The SPTLC1-SPTLC2-SPTSSB complex shows a strong preference for C18-CoA substrate, while the SPTLC1-SPTLC3-SPTSSB isozyme displays an ability to use a broader range of acyl-CoAs, without apparent preference. This chain is Serine palmitoyltransferase small subunit B (sptssb), found in Xenopus laevis (African clawed frog).